The following is a 337-amino-acid chain: MQVYYDKDADLSLIKGKTVAIIGYGSQGHAHAANLKDSGVNVVIGLRHGSSWKKAEAAGHVVKTVAEATKEADVVMLLLPDETMPAVYHAEVAANLKEGATLAFAHGFNVHYNQIVPRADLDVIMVAPKGPGHTVRSEYKRGGGVPSLIAVYQDNSGKAKDIALSYAAANGGTKGGVIETTFREETETDLFGEQAVLCGGVAELIKAGFETLTEAGYAPEMAYFECLHEMKLIVDLIFEGGIANMNYSISNNAEYGEYVTGPEVVNASSKEAMRNALKRIQTGEYAKMFIQEGNVNYASMTARRRLNADHQVEKVGARLRAMMPWITANKLVDQDKN.

The KARI N-terminal Rossmann domain occupies 1–180 (MQVYYDKDAD…GGTKGGVIET (180 aa)). Residues 24–27 (YGSQ), arginine 47, and serine 51 each bind NADP(+). Histidine 106 is an active-site residue. Glycine 132 is a binding site for NADP(+). Residues 181–326 (TFREETETDL…ARLRAMMPWI (146 aa)) form the KARI C-terminal knotted domain. Mg(2+) contacts are provided by aspartate 189, glutamate 193, glutamate 225, and glutamate 229. Residue serine 250 participates in substrate binding.

Belongs to the ketol-acid reductoisomerase family. Requires Mg(2+) as cofactor.

The enzyme catalyses (2R)-2,3-dihydroxy-3-methylbutanoate + NADP(+) = (2S)-2-acetolactate + NADPH + H(+). The catalysed reaction is (2R,3R)-2,3-dihydroxy-3-methylpentanoate + NADP(+) = (S)-2-ethyl-2-hydroxy-3-oxobutanoate + NADPH + H(+). Its pathway is amino-acid biosynthesis; L-isoleucine biosynthesis; L-isoleucine from 2-oxobutanoate: step 2/4. It functions in the pathway amino-acid biosynthesis; L-valine biosynthesis; L-valine from pyruvate: step 2/4. In terms of biological role, involved in the biosynthesis of branched-chain amino acids (BCAA). Catalyzes an alkyl-migration followed by a ketol-acid reduction of (S)-2-acetolactate (S2AL) to yield (R)-2,3-dihydroxy-isovalerate. In the isomerase reaction, S2AL is rearranged via a Mg-dependent methyl migration to produce 3-hydroxy-3-methyl-2-ketobutyrate (HMKB). In the reductase reaction, this 2-ketoacid undergoes a metal-dependent reduction by NADPH to yield (R)-2,3-dihydroxy-isovalerate. The polypeptide is Ketol-acid reductoisomerase (NADP(+)) (Neisseria gonorrhoeae (strain ATCC 700825 / FA 1090)).